Reading from the N-terminus, the 342-residue chain is Endoplasmic reticulum junction formation protein lunapark-1 (342 aa).

Residues 1–39 (MGNLFSRNKSPATELERVALSIDDLKKRLQTISSSNTNT) are Cytoplasmic-facing. A coiled-coil region spans residues 13–34 (TELERVALSIDDLKKRLQTISS). A helical membrane pass occupies residues 40–60 (LYYYYMSIVVILSIAMAHTWL). The Lumenal portion of the chain corresponds to 61-68 (RFEDPQKT). A helical transmembrane segment spans residues 69–89 (YVACALMLGAIGIVLAGRYVI). The Cytoplasmic segment spans residues 90–342 (NGFFSWRTNR…ESKTMETEFH (253 aa)). The stretch at 102–136 (QKLENAISQKTTLLDLVKETLKFKEAKEILDRYEK) forms a coiled coil. The interval 161–191 (ADSSMFATPKQEQKRVETPTAQGPNSAMNSM) is disordered. Residues 179–191 (PTAQGPNSAMNSM) show a composition bias toward polar residues. A C4-type; plays a role in ER morphology zinc finger spans residues 236–261 (CSICHTHNGMSTPAEYPYISFRCFEC). A disordered region spans residues 278–342 (RPPMGPKGIQ…ESKTMETEFH (65 aa)). The segment covering 295 to 321 (SENTHNMMENQKPSTDLTPSASQNGSE) has biased composition (polar residues). Over residues 322–342 (KGSDSENEKVPESKTMETEFH) the composition is skewed to basic and acidic residues.

This sequence belongs to the lunapark family. Expressed in cell bodies along the ventral cord around the pharynx and the tail both in larvae and adults. Also expressed in muscles and hypodermal cells.

It localises to the endoplasmic reticulum membrane. Functionally, plays a role in tubular endoplasmic reticulum network formation and maintenance. May be involved in central nervous system development. Has a presynaptic role in neurotransmission. Likely to operate in synaptogenesis by regulating vesicular transport or localization. Required for correct localization of rab-3 and snb-1. This Caenorhabditis elegans protein is Endoplasmic reticulum junction formation protein lunapark-1 (lnp-1).